Consider the following 129-residue polypeptide: UPF0344 protein SSP1805 (129 aa).

4 consecutive transmembrane segments (helical) span residues 1 to 21 (MLHM…AAYF), 36 to 56 (IHML…WVWI), 68 to 88 (MLLT…EVTI), and 100 to 120 (LMWT…ILPM).

This sequence belongs to the UPF0344 family.

The protein localises to the cell membrane. The sequence is that of UPF0344 protein SSP1805 from Staphylococcus saprophyticus subsp. saprophyticus (strain ATCC 15305 / DSM 20229 / NCIMB 8711 / NCTC 7292 / S-41).